A 129-amino-acid chain; its full sequence is Small ribosomal subunit protein uS11 (129 aa).

It belongs to the universal ribosomal protein uS11 family. As to quaternary structure, part of the 30S ribosomal subunit. Interacts with proteins S7 and S18. Binds to IF-3.

In terms of biological role, located on the platform of the 30S subunit, it bridges several disparate RNA helices of the 16S rRNA. Forms part of the Shine-Dalgarno cleft in the 70S ribosome. The protein is Small ribosomal subunit protein uS11 of Rhizorhabdus wittichii (strain DSM 6014 / CCUG 31198 / JCM 15750 / NBRC 105917 / EY 4224 / RW1) (Sphingomonas wittichii).